Reading from the N-terminus, the 504-residue chain is Histidine ammonia-lyase (504 aa).

The 5-imidazolinone (Ala-Gly) cross-link spans Ala142–Gly144. 2,3-didehydroalanine (Ser) is present on Ser143.

It belongs to the PAL/histidase family. Contains an active site 4-methylidene-imidazol-5-one (MIO), which is formed autocatalytically by cyclization and dehydration of residues Ala-Ser-Gly.

The protein localises to the cytoplasm. The enzyme catalyses L-histidine = trans-urocanate + NH4(+). It functions in the pathway amino-acid degradation; L-histidine degradation into L-glutamate; N-formimidoyl-L-glutamate from L-histidine: step 1/3. The protein is Histidine ammonia-lyase of Staphylococcus aureus (strain MSSA476).